Here is a 147-residue protein sequence, read N- to C-terminus: Small ribosomal subunit protein uS12 (147 aa).

It belongs to the universal ribosomal protein uS12 family. As to quaternary structure, part of the 30S ribosomal subunit.

Functionally, with S4 and S5 plays an important role in translational accuracy. Located at the interface of the 30S and 50S subunits. The protein is Small ribosomal subunit protein uS12 of Pyrobaculum islandicum (strain DSM 4184 / JCM 9189 / GEO3).